A 497-amino-acid chain; its full sequence is L-arabinose isomerase (497 aa).

Mn(2+) contacts are provided by glutamate 306, glutamate 331, histidine 348, and histidine 447.

It belongs to the arabinose isomerase family. Mn(2+) serves as cofactor.

It carries out the reaction beta-L-arabinopyranose = L-ribulose. Its pathway is carbohydrate degradation; L-arabinose degradation via L-ribulose; D-xylulose 5-phosphate from L-arabinose (bacterial route): step 1/3. Functionally, catalyzes the conversion of L-arabinose to L-ribulose. The chain is L-arabinose isomerase from Halalkalibacterium halodurans (strain ATCC BAA-125 / DSM 18197 / FERM 7344 / JCM 9153 / C-125) (Bacillus halodurans).